The primary structure comprises 438 residues: Delta(14)-sterol reductase ERG24 (438 aa).

Topologically, residues 1 to 13 (MVSALNPRTTEFE) are lumenal. Residues 14–34 (FGGLIGALGISIGLPVFTIIL) traverse the membrane as a helical segment. Topologically, residues 35-71 (NQMIRPDYFIKGFFQNFDIVELWNGIKPLRYYLGNRE) are cytoplasmic. A helical transmembrane segment spans residues 72–90 (LWTVYCLWYGILAVLDVIL). The Lumenal segment spans residues 91–109 (PGRVMKGVQLRDGSKLSYK). A helical transmembrane segment spans residues 110-127 (INGIAMSTTLVLVLAIRW). Topologically, residues 128 to 147 (KLTDGQLPELQYLYENHVSL) are cytoplasmic. A helical membrane pass occupies residues 148–172 (CIISILFSFFLATYCYVASFIPLIF). The Lumenal portion of the chain corresponds to 173-242 (KKNGNGKREK…LHHHYLKTGK (70 aa)). A helical membrane pass occupies residues 243–263 (INDALVLVNFLQGFYIFDGVL). Residues 264 to 308 (NEEGVLTMMDITTDGFGFMLAFGDLSLVPFTYSLQARYLSVSPVE) are Cytoplasmic-facing. The chain crosses the membrane as a helical span at residues 309–328 (LGWVKVVGILAIMFLGFHIF). The Lumenal segment spans residues 329–368 (HSANKQKSEFRQGKLENLKSIQTKRGTKLLCDGWWAKSQH). NADP(+)-binding positions include lysine 335, arginine 339, leucine 358, tryptophan 363, 370–371 (NY), aspartate 410, 414–418 (CRLKY), and tyrosine 425. The helical transmembrane segment at 369-387 (INYFGDWLISLSWCLATWF) threads the bilayer. The Cytoplasmic segment spans residues 388-438 (QTPLTYYYSLYFATLLLHRQQRDEHKCRLKYGENWEEYERKVPYKIIPYVY).

The protein belongs to the ERG4/ERG24 family.

The protein localises to the membrane. The enzyme catalyses 4,4-dimethyl-5alpha-cholesta-8,24-dien-3beta-ol + NADP(+) = 4,4-dimethyl-5alpha-cholesta-8,14,24-trien-3beta-ol + NADPH + H(+). It participates in steroid biosynthesis; zymosterol biosynthesis; zymosterol from lanosterol: step 2/6. With respect to regulation, inhibited by the morpholine antifungal drug fenpropimorph. In terms of biological role, delta(14)-sterol reductase; part of the third module of ergosterol biosynthesis pathway that includes the late steps of the pathway. ERG24 reduces the C14=C15 double bond of 4,4-dimethyl-cholesta-8,14,24-trienol to produce 4,4-dimethyl-cholesta-8,24-dienol. The third module or late pathway involves the ergosterol synthesis itself through consecutive reactions that mainly occur in the endoplasmic reticulum (ER) membrane. Firstly, the squalene synthase ERG9 catalyzes the condensation of 2 farnesyl pyrophosphate moieties to form squalene, which is the precursor of all steroids. Squalene synthase is crucial for balancing the incorporation of farnesyl diphosphate (FPP) into sterol and nonsterol isoprene synthesis. Secondly, the squalene epoxidase ERG1 catalyzes the stereospecific oxidation of squalene to (S)-2,3-epoxysqualene, which is considered to be a rate-limiting enzyme in steroid biosynthesis. Then, the lanosterol synthase ERG7 catalyzes the cyclization of (S)-2,3 oxidosqualene to lanosterol, a reaction that forms the sterol core. In the next steps, lanosterol is transformed to zymosterol through a complex process involving various demethylation, reduction and desaturation reactions. The lanosterol 14-alpha-demethylase ERG11 (also known as CYP51) catalyzes C14-demethylation of lanosterol to produce 4,4'-dimethyl cholesta-8,14,24-triene-3-beta-ol, which is critical for ergosterol biosynthesis. The C-14 reductase ERG24 reduces the C14=C15 double bond of 4,4-dimethyl-cholesta-8,14,24-trienol to produce 4,4-dimethyl-cholesta-8,24-dienol. 4,4-dimethyl-cholesta-8,24-dienol is substrate of the C-4 demethylation complex ERG25-ERG26-ERG27 in which ERG25 catalyzes the three-step monooxygenation required for the demethylation of 4,4-dimethyl and 4alpha-methylsterols, ERG26 catalyzes the oxidative decarboxylation that results in a reduction of the 3-beta-hydroxy group at the C-3 carbon to an oxo group, and ERG27 is responsible for the reduction of the keto group on the C-3. ERG28 has a role as a scaffold to help anchor ERG25, ERG26 and ERG27 to the endoplasmic reticulum and ERG29 regulates the activity of the iron-containing C4-methylsterol oxidase ERG25. Then, the sterol 24-C-methyltransferase ERG6 catalyzes the methyl transfer from S-adenosyl-methionine to the C-24 of zymosterol to form fecosterol. The C-8 sterol isomerase ERG2 catalyzes the reaction which results in unsaturation at C-7 in the B ring of sterols and thus converts fecosterol to episterol. The sterol-C5-desaturase ERG3 then catalyzes the introduction of a C-5 double bond in the B ring to produce 5-dehydroepisterol. The C-22 sterol desaturase ERG5 further converts 5-dehydroepisterol into ergosta-5,7,22,24(28)-tetraen-3beta-ol by forming the C-22(23) double bond in the sterol side chain. Finally, ergosta-5,7,22,24(28)-tetraen-3beta-ol is substrate of the C-24(28) sterol reductase ERG4 to produce ergosterol. This Saccharomyces cerevisiae (strain ATCC 204508 / S288c) (Baker's yeast) protein is Delta(14)-sterol reductase ERG24.